A 309-amino-acid chain; its full sequence is MSIRIIPQDELGSSEKRTADMIPPLLFPRLKNVYNRRAERLRELAENNPLGDYLRFAALIAHAQEVVLYDHPLEMDLTARIKEANDQGKPPLDIHVLPRDKHWQKLLHSLIAELKPEMNGPALAVIENLEKASEQELEQMASALFASDFASVSSDKAPFIWAALSLYWAQMASLIPGKARAEYGEARQYCPVCGSMPVSSMVQIDTTQGLRYLHCNLCETEWHVVRVKCSNCEQSRDLHYWSLENEQAAVKAESCGDCGTYLKILYQEKDPKVEAVADDLASLVLDARMEQEGFARSSINPFLFPGEGE.

This sequence belongs to the FdhE family.

It localises to the cytoplasm. Functionally, necessary for formate dehydrogenase activity. This Salmonella paratyphi A (strain ATCC 9150 / SARB42) protein is Protein FdhE.